A 161-amino-acid polypeptide reads, in one-letter code: Allophycocyanin alpha chain (161 aa).

At Asn-71 the chain carries N4-methylasparagine. A (2R,3E)-phycocyanobilin-binding site is contributed by Cys-81.

It belongs to the phycobiliprotein family. Heterodimer of an alpha and a beta chain. Contains one covalently linked phycocyanobilin chromophore.

It localises to the plastid. The protein resides in the chloroplast thylakoid membrane. In terms of biological role, light-harvesting photosynthetic bile pigment-protein from the phycobiliprotein complex. Allophycocyanin has a maximum absorption at approximately 650 nanometers. This chain is Allophycocyanin alpha chain (apcA), found in Pyropia haitanensis (Red seaweed).